The following is a 1360-amino-acid chain: NAD(+) hydrolase sarm1 (1360 aa).

Residues 27–52 (RITGGPGSISTTSASAITAPSTMSQT) form a disordered region. Over residues 34 to 48 (SISTTSASAITAPST) the composition is skewed to low complexity. SAM domains are found at residues 690–754 (WSVE…LKRM) and 760–828 (KDTA…NSLP). One can recognise a TIR domain in the interval 837–981 (KTLDVFVSYR…KLERFLRGEK (145 aa)). NAD(+)-binding positions include 846 to 847 (RR) and Glu-876. Glu-919 is an active-site residue. Positions 997–1010 (VSYQRMHSNDSDYQ) are enriched in polar residues. Disordered regions lie at residues 997–1026 (VSYQ…GGGG), 1046–1085 (GQAN…SQIL), 1121–1148 (SAAG…LLDQ), 1192–1217 (NDSV…KSRS), and 1249–1343 (IPMT…GNNK). Positions 1012–1026 (GGAGAGSGAGTGGGG) are enriched in gly residues. Over residues 1046–1073 (GQANHQANRYRQSPSPARQRGSTSQLSG) the composition is skewed to polar residues. The span at 1125 to 1135 (LGHGSGSGMGS) shows a compositional bias: gly residues. A compositionally biased stretch (low complexity) spans 1321–1335 (SLTSNKTSNSSLGSN).

Belongs to the SARM1 family. As to expression, widely expressed in larval brains and adult brains.

Its subcellular location is the cytoplasm. The protein localises to the cell projection. The protein resides in the axon. The catalysed reaction is NAD(+) + H2O = ADP-D-ribose + nicotinamide + H(+). It carries out the reaction NAD(+) = cyclic ADP-beta-D-ribose + nicotinamide + H(+). Functionally, NAD(+) hydrolase, which plays a key role in axonal degeneration following injury by regulating NAD(+) metabolism. Acts as a negative regulator of MYD88- and TRIF-dependent toll-like receptor signaling pathway by promoting Wallerian degeneration, an injury-induced form of programmed subcellular death which involves degeneration of an axon distal to the injury site. Wallerian degeneration is triggered by NAD(+) depletion: in response to injury, it is activated and catalyzes cleavage of NAD(+) into ADP-D-ribose (ADPR), cyclic ADPR (cADPR) and nicotinamide; NAD(+) cleavage promoting axon destruction. Involved in the down-regulation of the tracheal immune response to Gram-negative bacteria. This is likely by mediating Tollo signaling in the tracheal epithelium. The polypeptide is NAD(+) hydrolase sarm1 (Drosophila melanogaster (Fruit fly)).